Here is a 239-residue protein sequence, read N- to C-terminus: Transcriptional regulatory protein DcuR (239 aa).

Residues 3 to 121 (NVLIIDDDAM…RFEEALTGWR (119 aa)) enclose the Response regulatory domain. Position 56 is a 4-aspartylphosphate (Asp-56). Residues 181–200 (TDELANEVNISRVSCRKYLI) constitute a DNA-binding region (H-T-H motif).

In terms of processing, phosphorylated and activated by DcuS.

It is found in the cytoplasm. Member of the two-component regulatory system DcuR/DcuS. Involved in the C4-dicarboxylate-stimulated regulation of the genes encoding the anaerobic fumarate respiratory system (frdABCD; nuoAN; dcuB; dcuC; sdhCDAB; etc.). Weakly regulates the aerobic C4-dicarboxylate transporter dctA. The sequence is that of Transcriptional regulatory protein DcuR (dcuR) from Escherichia coli O6:H1 (strain CFT073 / ATCC 700928 / UPEC).